The following is a 469-amino-acid chain: MKKTLYQKLFDSHIVHEAPGEVPILYINRHLIHEVTSPQAFDGLRVAGRQVRQVNKTFGTMDHSISTQVRDVNKLTGQAKIQVLELDKNCKATGISLFDMNSKQQGIVHVMGPEQGLTLPGMTIVCGDSHTATHGAFGALAFGIGTSEVEHVLATQTLKQARAKSMKIEVRGEVAKGITAKDIILAIIGKTTMAGGTGHVVEFCGEAIRALSMEGRMTVCNMAIEMGAKAGLIAPDETTFAYLKDRPYAPKGKDWESAVEYWKTLKTDEGAEFDTVVILDAKDIAPQVTWGTNPGQVIGIDQKVPNPAEMQDPVTKASAEKALAYIGLSPETDLKDISVDQVFIGSCTNSRIEDLRAAATVMKGRKKADNVKRVLVVPGSGLVKEQAEKEGLDKIFIAAGAEWRNPGCSMCLGMNDDRLGEWERCASTSNRNFEGRQGRNGRTHLVSPAMAAAAAVFGKFVDIRYMELN.

Residues Cys-347, Cys-408, and Cys-411 each coordinate [4Fe-4S] cluster.

The protein belongs to the aconitase/IPM isomerase family. LeuC type 1 subfamily. Heterodimer of LeuC and LeuD. [4Fe-4S] cluster is required as a cofactor.

It carries out the reaction (2R,3S)-3-isopropylmalate = (2S)-2-isopropylmalate. The protein operates within amino-acid biosynthesis; L-leucine biosynthesis; L-leucine from 3-methyl-2-oxobutanoate: step 2/4. In terms of biological role, catalyzes the isomerization between 2-isopropylmalate and 3-isopropylmalate, via the formation of 2-isopropylmaleate. The chain is 3-isopropylmalate dehydratase large subunit from Histophilus somni (strain 129Pt) (Haemophilus somnus).